The following is a 305-amino-acid chain: L-lactate dehydrogenase (305 aa).

NAD(+)-binding positions include valine 11, aspartate 32, lysine 37, and 76–77 (GV). Substrate-binding positions include glutamine 79, arginine 85, and 117–120 (NPVD). NAD(+) contacts are provided by residues 115-117 (ATN) and serine 140. A substrate-binding site is contributed by 145-148 (DTAR). Positions 150 and 165 each coordinate beta-D-fructose 1,6-bisphosphate. Histidine 172 acts as the Proton acceptor in catalysis. Residue tyrosine 218 is modified to Phosphotyrosine. Residue threonine 227 participates in substrate binding.

It belongs to the LDH/MDH superfamily. LDH family. As to quaternary structure, homotetramer.

Its subcellular location is the cytoplasm. The enzyme catalyses (S)-lactate + NAD(+) = pyruvate + NADH + H(+). Its pathway is fermentation; pyruvate fermentation to lactate; (S)-lactate from pyruvate: step 1/1. Its activity is regulated as follows. Allosterically activated by fructose 1,6-bisphosphate (FBP). Its function is as follows. Catalyzes the conversion of lactate to pyruvate. The polypeptide is L-lactate dehydrogenase (Chloroherpeton thalassium (strain ATCC 35110 / GB-78)).